Reading from the N-terminus, the 985-residue chain is MMKYIYILLIFSLLFLKINSQNTILLNALIYDQTPSRNNDFQIPSPGGIAKGLVKSNLGSDNTPVLVAERSSTIHSPETFNQWFHNYPGVNLPINYQITLTQSTTNPNVYAYTNDAFFPIDGQGFDNKTNYPYEAVYRDERGTPHNFHFCLQIHSMFAYKKGDTFYFNGDDDVWVFMNKILVVDLGGIHGKATTSINLDRLGLTEGTNYPFDFFYCERHTTESHISIETSIELTCPGYDECGVCQGDGSSCCTKSNCNDNPNNKLNCITAQCSNNVCVKSAPSCPSINPCEAGTCIPNFGCSYSEITCNRTNCENSFCNKDTNTCERSPIANCVSCSNGPCITTDLCFPQKCDSKGNCVSSNKNCDDRDYCTTDTCQDGICIHTPIPKCVNCAGTGCITTNDCNPKVCAPDGKSCLTEVLCNDNKTCTKDFCFAGHCLFIPIDCDDVDDCTVDTCDETLGCVHTPLDNCIACTGLACITTDLCNQKLCTDNGTKCTEVPKVCDDGNACSNDRCISPNGTCAHEILQNCTDCGTFNCITLDLCSPLSCPTDGSTTCVSIPKTCNDNKPCTLNQCHSPDGICTAVPIENCVKCNQTNRGCLTVDFCNPVECSENGDSCIITNRTCNDYNYCTTDSCINGQCYNEIIQNCENCTNGIGCTTTDFCFQQICSDSGDTCKTVPLDCNDGLSCTTETCLGPNGTCTHTIIKNCIECGIEPCITENLCLPVVCGPDGSCLYNYTESTCDDNDACTSDVCTEYGCEHYTYTGCMNCTNGGCFTTPDTCNHYGCNFTGDGKCFFTHLECDDNDPCTKDHCLYSGDCYYEKLTNCTTPTPTQTPPPTQTPTNHSIGVNECDCCPEGQYCLLIFGHERCFIANDGGDGIPEETIGCPGVTTGTPTSTDGGTGHYTESGTGNPHLCDRHHCRSGMECHVINGIPECLPSKYKCLDCLDLHCEKQGGKTCFTIENQNYKPNIKGCKDDSCCKYTPTCR.

Residues Met1–Ser20 form the signal peptide. One can recognise a PA14 domain in the interval Gln102–Asp247. 15 N-linked (GlcNAc...) asparagine glycosylation sites follow: Asn127, Asn309, Asn424, Asn491, Asn517, Asn527, Asn592, Asn620, Asn649, Asn696, Asn735, Asn767, Asn786, Asn824, and Asn842.

The protein belongs to the prespore-cell-inducing factor family.

It is found in the secreted. The sequence is that of Protein psiQ (psiQ) from Dictyostelium discoideum (Social amoeba).